The following is a 255-amino-acid chain: Altered inheritance of mitochondria protein 36, mitochondrial (255 aa).

The transit peptide at 1-40 (MLRPLRKSVLASCRHCFKVCGGLPQKQLPLFSPLLLRARY) directs the protein to the mitochondrion. The chain crosses the membrane as a helical span at residues 64–82 (IFLVAIIGTVIFVKTVQSL).

It belongs to the AIM36 family.

The protein localises to the mitochondrion membrane. The chain is Altered inheritance of mitochondria protein 36, mitochondrial (AIM36) from Saccharomyces cerevisiae (strain RM11-1a) (Baker's yeast).